A 477-amino-acid polypeptide reads, in one-letter code: Mitochondrial adenyl nucleotide antiporter SLC25A24 (477 aa).

Residues 1 to 174 (MHQLIRKFVF…RYWKKSTVLD (174 aa)) form a regulatory N-terminal domain region. Topologically, residues 1-198 (MHQLIRKFVF…EKTTGMWWKQ (198 aa)) are mitochondrial intermembrane. The region spanning 20-55 (DNTKSFAELFEKLDVNKDGKVDVSELKTGLAAMGFS) is the EF-hand 1 domain. Residues Asp-33, Asn-35, Asp-37, Lys-39, Glu-44, Asp-69, Asp-71, Asp-73, Glu-80, Asp-100, Asn-102, Asp-104, Arg-106, Glu-111, Asp-136, Asp-138, Thr-140, Thr-142, and Glu-147 each contribute to the Ca(2+) site. 2 consecutive EF-hand domains span residues 87–122 (EHEKKLRLTFKSLDKNEDGRVDAKEIQQSLKDLGIN) and 123–158 (LSDKDAEKILHSIDVDGTMTLDWNEWREHFLFNPAE). The interval 160–169 (LQQIIRYWKK) is linker region. The segment at 175–477 (IGDSLTIPDE…YMRSGLGISK (303 aa)) is C-terminal transmembrane transporter domain. Solcar repeat units follow at residues 193-279 (GMWW…YKKL), 287-372 (VQSH…LKNT), and 384-472 (PGVL…MRSG). A helical membrane pass occupies residues 199-216 (LAAGGVAGAVSRTGTAPL). Over 217–253 (DRMKVFMQVHSSKTNKISLVNGFKQMIKEGGVASLWR) the chain is Mitochondrial matrix. The chain crosses the membrane as a helical span at residues 254–273 (GNGVNVIKIAPETAIKFMAY). Over 274–296 (EQYKKLLSKDGGKVQSHERFMAG) the chain is Mitochondrial intermembrane. The chain crosses the membrane as a helical span at residues 297–310 (SLAGATAQTAIYPM). The Mitochondrial matrix portion of the chain corresponds to 311 to 346 (EVMKTRLTLRKTGQYSGMFDCAKKILRKEGVKAFYK). A helical transmembrane segment spans residues 347-366 (GYVPNILGIIPYAGIDLAVY). The Mitochondrial intermembrane portion of the chain corresponds to 367–389 (ETLKNTWLSHYAKDTANPGVLVL). Residues 390 to 407 (LGCGTISSTCGQLASYPL) traverse the membrane as a helical segment. At 408 to 446 (ALIRTRMQAMASMEGSEQVSMSKLVKKIMQKEGFFGLYR) the chain is on the mitochondrial matrix side. A helical transmembrane segment spans residues 447 to 466 (GILPNFMKVIPAVSISYVVY). The Mitochondrial intermembrane portion of the chain corresponds to 467–477 (EYMRSGLGISK).

Belongs to the mitochondrial carrier (TC 2.A.29) family. As to quaternary structure, monomer.

The protein resides in the mitochondrion inner membrane. It catalyses the reaction Mg(2+)(out) + phosphate(in) + ATP(out) = Mg(2+)(in) + phosphate(out) + ATP(in). The catalysed reaction is ADP(out) + phosphate(in) + H(+)(out) = ADP(in) + phosphate(out) + H(+)(in). The enzyme catalyses AMP(out) + phosphate(in) = AMP(in) + phosphate(out). It carries out the reaction phosphate(in) + ATP(out) + 2 H(+)(out) = phosphate(out) + ATP(in) + 2 H(+)(in). It catalyses the reaction dADP(in) + ADP(out) = dADP(out) + ADP(in). The catalysed reaction is Mg(2+)(in) + ADP(out) + ATP(in) + H(+)(out) = Mg(2+)(out) + ADP(in) + ATP(out) + H(+)(in). The enzyme catalyses ADP(out) + diphosphate(in) = ADP(in) + diphosphate(out). It carries out the reaction dAMP(in) + ADP(out) + H(+)(out) = dAMP(out) + ADP(in) + H(+)(in). It catalyses the reaction 3'-AMP(in) + ADP(out) + H(+)(out) = 3'-AMP(out) + ADP(in) + H(+)(in). The catalysed reaction is dAMP(out) + phosphate(in) = dAMP(in) + phosphate(out). The enzyme catalyses 3'-AMP(out) + phosphate(in) = 3'-AMP(in) + phosphate(out). It carries out the reaction dADP(out) + phosphate(in) + H(+)(out) = dADP(in) + phosphate(out) + H(+)(in). Activated by an increase in cytosolic calcium levels that induce a conformational change of the N-terminal regulatory domain, uncapping the channel and allowing transport. Inhibited by bathophenanthroline, mersalyl, p-hydroxymercuribenzoate, bromcresol purple and tannic acid. In terms of biological role, electroneutral antiporter that mediates the transport of adenyl nucleotides through the inner mitochondrial membrane. Originally identified as an ATP-magnesium/inorganic phosphate antiporter, it also acts as a broad specificity adenyl nucleotide antiporter. By regulating the mitochondrial matrix adenyl nucleotide pool could adapt to changing cellular energetic demands and indirectly regulate adenyl nucleotide-dependent metabolic pathways. This Danio rerio (Zebrafish) protein is Mitochondrial adenyl nucleotide antiporter SLC25A24 (slc25a24).